A 185-amino-acid polypeptide reads, in one-letter code: Ribosome-recycling factor (185 aa).

It belongs to the RRF family.

It is found in the cytoplasm. Responsible for the release of ribosomes from messenger RNA at the termination of protein biosynthesis. May increase the efficiency of translation by recycling ribosomes from one round of translation to another. This Mycolicibacterium vanbaalenii (strain DSM 7251 / JCM 13017 / BCRC 16820 / KCTC 9966 / NRRL B-24157 / PYR-1) (Mycobacterium vanbaalenii) protein is Ribosome-recycling factor.